Consider the following 364-residue polypeptide: Zinc finger protein 474 (364 aa).

Over residues 1–10 the composition is skewed to basic residues; that stretch reads MERGKKKRIS. Disordered regions lie at residues 1 to 21 and 37 to 60; these read MERG…HHSK and SYSS…DTQK. Residues 93-122 form a C2HC/C3H-type 1 zinc finger; that stretch reads GFRVCYICGREFGSQSIAIHEPQCLQKWHI. Residues Cys-97, Cys-100, His-112, and Cys-116 each contribute to the Zn(2+) site. The disordered stretch occupies residues 127–147; sequence LPKHLRRPEPSKPQSLSSSGS. Residues 138–147 are compositionally biased toward low complexity; sequence KPQSLSSSGS. 3 C2HC/C3H-type zinc fingers span residues 164–193, 220–249, and 283–312; these read QLLP…KGEG, RTVI…KWKM, and QLVF…HPYG. Residues Cys-168, Cys-171, His-183, Cys-187, Cys-224, Cys-227, His-239, Cys-243, Cys-287, Cys-290, His-302, and Cys-306 each contribute to the Zn(2+) site. Residues 187 to 214 form a disordered region; the sequence is CKPKGEGPRAPHSNSSDHLTGLKKACSG.

Zn(2+) is required as a cofactor.

The protein is Zinc finger protein 474 (ZNF474) of Homo sapiens (Human).